The chain runs to 1138 residues: Tyrosine-protein kinase receptor Tie-1 (1138 aa).

Residues M1–A21 form the signal peptide. The Extracellular portion of the chain corresponds to A22–Q759. Positions C43–C105 constitute an Ig-like C2-type 1 domain. 2 N-linked (GlcNAc...) asparagine glycosylation sites follow: N83 and N161. 3 consecutive EGF-like domains span residues G214–E256, A258–Q303, and A305–E345. Cystine bridges form between C228/C237, C231/C244, and C246/C255. 3 disulfides stabilise this stretch: C315/C327, C321/C333, and C335/C344. The Ig-like C2-type 2 domain maps to C372–C426. Fibronectin type-III domains follow at residues P446–P545, Q548–S642, and A646–N739. Residues N503, N596, and N709 are each glycosylated (N-linked (GlcNAc...) asparagine). A helical transmembrane segment spans residues Q760–V784. Topologically, residues C785–A1138 are cytoplasmic. Residues I839–V1118 form the Protein kinase domain. Residues I845–V853 and K870 each bind ATP. D979 serves as the catalytic Proton acceptor. Position 1007 is a phosphotyrosine; by autocatalysis (Y1007).

This sequence belongs to the protein kinase superfamily. Tyr protein kinase family. Tie subfamily. As to quaternary structure, heterodimer with TEK/TIE2. Interacts with SVEP1 (via C-terminus). Post-translationally, phosphorylated on tyrosine residues in response to ANGPT1, most likely by TEK/TIE2. In terms of tissue distribution, specifically expressed in developing vascular endothelial cells.

The protein localises to the cell membrane. It catalyses the reaction L-tyrosyl-[protein] + ATP = O-phospho-L-tyrosyl-[protein] + ADP + H(+). Transmembrane tyrosine-protein kinase that may modulate TEK/TIE2 activity and contribute to the regulation of angiogenesis. This Homo sapiens (Human) protein is Tyrosine-protein kinase receptor Tie-1 (TIE1).